A 468-amino-acid polypeptide reads, in one-letter code: Kynureninase 2 (468 aa).

Residues Leu-134, Thr-135, 162-165 (FPSD), Asp-247, His-250, and Tyr-272 each bind pyridoxal 5'-phosphate. N6-(pyridoxal phosphate)lysine is present on Lys-273. Residues Trp-312 and Asn-340 each coordinate pyridoxal 5'-phosphate.

This sequence belongs to the kynureninase family. In terms of assembly, homodimer. Pyridoxal 5'-phosphate serves as cofactor.

It is found in the cytoplasm. It catalyses the reaction L-kynurenine + H2O = anthranilate + L-alanine + H(+). It carries out the reaction 3-hydroxy-L-kynurenine + H2O = 3-hydroxyanthranilate + L-alanine + H(+). The protein operates within amino-acid degradation; L-kynurenine degradation; L-alanine and anthranilate from L-kynurenine: step 1/1. It functions in the pathway cofactor biosynthesis; NAD(+) biosynthesis; quinolinate from L-kynurenine: step 2/3. Functionally, catalyzes the cleavage of L-kynurenine (L-Kyn) and L-3-hydroxykynurenine (L-3OHKyn) into anthranilic acid (AA) and 3-hydroxyanthranilic acid (3-OHAA), respectively. The chain is Kynureninase 2 (bna5-2) from Aspergillus oryzae (strain ATCC 42149 / RIB 40) (Yellow koji mold).